The sequence spans 403 residues: MTHRRDTVQMEQRWTNARLATMAGDDLGLIDDGVVAAKDGRIIYAGPAKDAPATQGAVHDCEGRLITPGLIDCHTHLIHGGNRANEWAMRLEGASYDEIARAGGGIVSTMRATRDASEAELVASALPRLDALIAEGVTTIEIKSGYGLSTNDELKMLRAARALANIRAIRVEPTFLGAHALPPEYQGDSDAYIDLVVGEMIPAVASLATAVDAFCEGIGFSPEQCARVLAAAKAHGLKVKLHAEQLSALHGSALAARHGALSADHLEHATDEDVRAMAEAGSVAVLLPGAYYFMRETRLPPVQAMRRHGTRIALATDNNPGTSPTSSLLLMLNMGATLFGLTVIEALRGVTVNAAAALGLSAEIGTIEVGKACDLAIWDVGDPAELVYRIGFNPLHQRIKDGQ.

The Fe(3+) site is built by His-74 and His-76. Zn(2+)-binding residues include His-74 and His-76. 4-imidazolone-5-propanoate contacts are provided by Arg-83, Tyr-146, and His-179. Tyr-146 serves as a coordination point for N-formimidoyl-L-glutamate. His-242 is a Fe(3+) binding site. A Zn(2+)-binding site is contributed by His-242. Gln-245 provides a ligand contact to 4-imidazolone-5-propanoate. Asp-317 provides a ligand contact to Fe(3+). Residue Asp-317 participates in Zn(2+) binding. N-formimidoyl-L-glutamate-binding residues include Asn-319 and Gly-321. Thr-322 is a 4-imidazolone-5-propanoate binding site.

This sequence belongs to the metallo-dependent hydrolases superfamily. HutI family. The cofactor is Zn(2+). Fe(3+) is required as a cofactor.

The protein localises to the cytoplasm. The catalysed reaction is 4-imidazolone-5-propanoate + H2O = N-formimidoyl-L-glutamate. It participates in amino-acid degradation; L-histidine degradation into L-glutamate; N-formimidoyl-L-glutamate from L-histidine: step 3/3. Functionally, catalyzes the hydrolytic cleavage of the carbon-nitrogen bond in imidazolone-5-propanoate to yield N-formimidoyl-L-glutamate. It is the third step in the universal histidine degradation pathway. In Sphingopyxis alaskensis (strain DSM 13593 / LMG 18877 / RB2256) (Sphingomonas alaskensis), this protein is Imidazolonepropionase.